We begin with the raw amino-acid sequence, 1251 residues long: Probable transcription factor TDA9 (1251 aa).

2 C2H2-type zinc fingers span residues 61 to 83 and 89 to 112; these read FLCH…QRAH and FLCV…HKLH. Disordered stretches follow at residues 160–227 and 398–428; these read VQLK…KSKR and NHSH…IEKS. Positions 164 to 173 are enriched in basic residues; that stretch reads KAAKEKKNGK. The segment covering 183–202 has biased composition (polar residues); it reads YGANNHSTDVSPSVGNSSTP. Positions 407-428 are enriched in low complexity; the sequence is NNSSSGINYSNNKNNNESIEKS. Phosphoserine is present on residues Ser-527 and Ser-603. Positions 617 to 634 are enriched in low complexity; that stretch reads SLTPSLTTQTATTQSGPG. The disordered stretch occupies residues 617-636; sequence SLTPSLTTQTATTQSGPGWT.

The protein belongs to the RSF2/TDA9 family.

The protein localises to the nucleus. Its function is as follows. DNA-binding protein that acts probably as a transcription factor. This Saccharomyces cerevisiae (strain ATCC 204508 / S288c) (Baker's yeast) protein is Probable transcription factor TDA9 (TDA9).